We begin with the raw amino-acid sequence, 73 residues long: Conotoxin Leo-O2 (73 aa).

Positions 1-22 are cleaved as a signal peptide; it reads MKLTCVLIIAVLFLTACQLVTA. The propeptide occupies 23–47; it reads DYSGDEQQYRAMRLIDAMRNFGDTR. Cystine bridges form between C49–C59, C56–C64, and C58–C69.

It belongs to the conotoxin O1 superfamily. In terms of tissue distribution, expressed by the venom duct.

The protein resides in the secreted. This is Conotoxin Leo-O2 from Conus leopardus (Leopard cone).